A 446-amino-acid chain; its full sequence is MENISDLWNSALKELEKKVSKPSYETWLKSTTAHNLKKDVLTITAPNEFARDWLESHYSELISETLYDLTGAKLAIRFIIPQSQAEEDIDLPPVKPNPAQDDSAHLPQSMLNPKYTFDTFVIGSGNRFAHAASLAVAEAPAKAYNPLFIYGGVGLGKTHLMHAIGHYVIEHNPNAKVVYLSSEKFTNEFINSIRDNKAVDFRNKYRNVDVLLIDDIQFLAGKEQTQEEFFHTFNALHEESKQIVISSDRPPKEIPTLEDRLRSRFEWGLITDITPPDLETRIAILRKKAKAEGLDIPNEVMLYIANQIDSNIRELEGALIRVVAYSSLINKDINADLAAEALKDIIPNSKPKIISIYDIQKAVGDVYQVKLEDFKAKKRTKSVAFPRQIAMYLSRELTDSSLPKIGEEFGGRDHTTVIHAHEKISKLLKTDTQLQKQVEEINGILK.

Residues 1–81 form a domain I, interacts with DnaA modulators region; it reads MENISDLWNS…AKLAIRFIIP (81 aa). The interval 81 to 109 is domain II; it reads PQSQAEEDIDLPPVKPNPAQDDSAHLPQS. The tract at residues 110–326 is domain III, AAA+ region; sequence MLNPKYTFDT…GALIRVVAYS (217 aa). Residues G154, G156, K157, and T158 each contribute to the ATP site. Positions 327–446 are domain IV, binds dsDNA; that stretch reads SLINKDINAD…QVEEINGILK (120 aa).

It belongs to the DnaA family. In terms of assembly, oligomerizes as a right-handed, spiral filament on DNA at oriC.

The protein localises to the cytoplasm. Functionally, plays an essential role in the initiation and regulation of chromosomal replication. ATP-DnaA binds to the origin of replication (oriC) to initiate formation of the DNA replication initiation complex once per cell cycle. Binds the DnaA box (a 9 base pair repeat at the origin) and separates the double-stranded (ds)DNA. Forms a right-handed helical filament on oriC DNA; dsDNA binds to the exterior of the filament while single-stranded (ss)DNA is stabiized in the filament's interior. The ATP-DnaA-oriC complex binds and stabilizes one strand of the AT-rich DNA unwinding element (DUE), permitting loading of DNA polymerase. After initiation quickly degrades to an ADP-DnaA complex that is not apt for DNA replication. Binds acidic phospholipids. This is Chromosomal replication initiator protein DnaA from Bacillus cereus (strain B4264).